The chain runs to 401 residues: L-rhamnonate dehydratase (401 aa).

His-29 and Arg-55 together coordinate substrate. Residues Asp-222, Glu-248, and Glu-276 each contribute to the Mg(2+) site. Catalysis depends on His-325, which acts as the Proton acceptor. Glu-345 contributes to the substrate binding site.

Belongs to the mandelate racemase/muconate lactonizing enzyme family. RhamD subfamily. As to quaternary structure, homooctamer; tetramer of dimers. Mg(2+) serves as cofactor.

It carries out the reaction L-rhamnonate = 2-dehydro-3-deoxy-L-rhamnonate + H2O. In terms of biological role, catalyzes the dehydration of L-rhamnonate to 2-keto-3-deoxy-L-rhamnonate (KDR). This is L-rhamnonate dehydratase from Salmonella schwarzengrund (strain CVM19633).